Consider the following 1012-residue polypeptide: ATP-dependent DNA helicase MPH1 (1012 aa).

Residues 94-261 enclose the Helicase ATP-binding domain; that stretch reads IVQKSLYQNT…EVVNNLNISN (168 aa). An ATP-binding site is contributed by 107 to 114; that stretch reads IPTGMGKT. Positions 209-212 match the DEAH box motif; that stretch reads DEAH. A Helicase C-terminal domain is found at 430–654; that stretch reads KLQKIINELS…NFVEYKKSDR (225 aa). A disordered region spans residues 493-555; it reads DEGFIRKNKP…AQISGMNQKQ (63 aa). The span at 498-510 shows a compositional bias: basic residues; the sequence is RKNKPKGRKKADR. Positions 511 to 537 are enriched in basic and acidic residues; the sequence is LKRLEEDKQKQLSKAKQKEQEKVERSS.

It belongs to the DEAD box helicase family. DEAH subfamily. FANCM sub-subfamily. As to quaternary structure, interacts with the MHF histone-fold complex to form the FANCM-MHF complex.

The protein localises to the nucleus. The enzyme catalyses ATP + H2O = ADP + phosphate + H(+). In terms of biological role, ATP-dependent DNA helicase involved in DNA damage repair by homologous recombination and in genome maintenance. Capable of unwinding D-loops. Plays a role in limiting crossover recombinants during mitotic DNA double-strand break (DSB) repair. Component of a FANCM-MHF complex which promotes gene conversion at blocked replication forks, probably by reversal of the stalled fork. The polypeptide is ATP-dependent DNA helicase MPH1 (Vanderwaltozyma polyspora (strain ATCC 22028 / DSM 70294 / BCRC 21397 / CBS 2163 / NBRC 10782 / NRRL Y-8283 / UCD 57-17) (Kluyveromyces polysporus)).